A 1135-amino-acid chain; its full sequence is Retinoblastoma-like protein 2 (1135 aa).

The disordered stretch occupies residues 1–43 (MASGGNQSPPPPPAAAASSEEEEEDGDAADRAQPAGSPSHQIQ). S410 carries the phosphoserine modification. T414 carries the phosphothreonine modification. A domain A region spans residues 414–613 (TPVSTAAHSL…DRIRDNENRV (200 aa)). Residues 414–1021 (TPVSTAAHSL…QAFAMKYSQA (608 aa)) form a pocket; binds E1A region. A glycan (O-linked (GlcNAc) serine) is linked at S417. The spacer stretch occupies residues 614 to 824 (PTCEEVMPPQ…PGQPLTSSSI (211 aa)). S636 carries the phosphoserine modification. Position 639 is a phosphothreonine (T639). 8 positions are modified to phosphoserine: S659, S669, S684, S942, S946, S960, S965, and S967. Composition is skewed to polar residues over residues 661 to 674 (TTLY…TVST), 683 to 692 (DSPSEGSTSG), 935 to 950 (SGSS…PTEL), and 958 to 969 (DSSPVMRSNSTL). Disordered stretches follow at residues 661–698 (TTLY…PPQP) and 930–994 (GKRR…VEEE). The domain B stretch occupies residues 825–1021 (RPRKTSSLAL…QAFAMKYSQA (197 aa)). T968 bears the Phosphothreonine mark. Over residues 971–981 (VPQPSSAPPTP) the composition is skewed to pro residues. A phosphoserine mark is found at S975 and S976. T980 bears the Phosphothreonine mark. 4 positions are modified to phosphoserine: S1031, S1064, S1076, and S1108.

Belongs to the retinoblastoma protein (RB) family. Interacts with AATF and RINT1. Component of the DREAM complex (also named LINC complex) at least composed of E2F4, E2F5, LIN9, LIN37, LIN52, LIN54, MYBL1, MYBL2, RBL1, RBL2, RBBP4, TFDP1 and TFDP2. The complex exists in quiescent cells where it represses cell cycle-dependent genes. It dissociates in S phase when LIN9, LIN37, LIN52 and LIN54 form a subcomplex that binds to MYBL2. Interacts with USP4. Interacts with KMT5B, KMT5C and USP4. Interacts with PML. Interacts with RBBP9. Interacts with CD53. Post-translationally, during G0 and early G1 phase of the cell cycle, phosphorylated on Ser-636 and on 5 sites within the domain B. Phosphorylation on Ser-669 in G1 leads to its ubiquitin-dependent proteolysis.

The protein resides in the nucleus. Functionally, key regulator of entry into cell division. Directly involved in heterochromatin formation by maintaining overall chromatin structure and, in particular, that of constitutive heterochromatin by stabilizing histone methylation. Recruits and targets histone methyltransferases KMT5B and KMT5C, leading to epigenetic transcriptional repression. Controls histone H4 'Lys-20' trimethylation. Probably acts as a transcription repressor by recruiting chromatin-modifying enzymes to promoters. Potent inhibitor of E2F-mediated trans-activation, associates preferentially with E2F5. Binds to cyclins A and E. Binds to and may be involved in the transforming capacity of the adenovirus E1A protein. May act as a tumor suppressor. The chain is Retinoblastoma-like protein 2 (Rbl2) from Mus musculus (Mouse).